A 309-amino-acid polypeptide reads, in one-letter code: tRNA dimethylallyltransferase (309 aa).

Position 10–17 (10–17 (GPTAVGKT)) interacts with ATP. 12-17 (TAVGKT) contributes to the substrate binding site. The tract at residues 35–38 (DSMQ) is interaction with substrate tRNA.

It belongs to the IPP transferase family. In terms of assembly, monomer. It depends on Mg(2+) as a cofactor.

It carries out the reaction adenosine(37) in tRNA + dimethylallyl diphosphate = N(6)-dimethylallyladenosine(37) in tRNA + diphosphate. In terms of biological role, catalyzes the transfer of a dimethylallyl group onto the adenine at position 37 in tRNAs that read codons beginning with uridine, leading to the formation of N6-(dimethylallyl)adenosine (i(6)A). The polypeptide is tRNA dimethylallyltransferase (Clostridium beijerinckii (strain ATCC 51743 / NCIMB 8052) (Clostridium acetobutylicum)).